The following is a 307-amino-acid chain: Olfactory receptor 8K5 (307 aa).

At 1-25 (MGQHNLTVLTEFILMELTRRPELQI) the chain is on the extracellular side. Asn5 is a glycosylation site (N-linked (GlcNAc...) asparagine). A helical membrane pass occupies residues 26-46 (PLFGVFLVIYLITVVGNLTMI). At 47–54 (ILTKLDSH) the chain is on the cytoplasmic side. Residues 55-75 (LHTPMYFSIRHLAFVDLGNST) traverse the membrane as a helical segment. The Extracellular portion of the chain corresponds to 76–99 (VICPKVLANFVVDRNTISYYACAA). A disulfide bridge connects residues Cys97 and Cys189. A helical membrane pass occupies residues 100 to 120 (QLAFFLMFIISEFFILSAMAY). Over 121–139 (DRYVAICNPLLYYVIMSQR) the chain is Cytoplasmic. The helical transmembrane segment at 140 to 160 (LCHVLVGIQYLYSTFQALMFT) threads the bilayer. The Extracellular segment spans residues 161-197 (IKIFTLTFCGSNVISHFYCDDVPLLPMLCSNAQEIEL). The chain crosses the membrane as a helical span at residues 198–217 (LSILFSVFNLISSFLIVLVS). The Cytoplasmic segment spans residues 218-237 (YMLILLAICQMHSAEGRKKA). The helical transmembrane segment at 238–258 (FSTCGSHLTVVVVFYGSLLFM) threads the bilayer. At 259–271 (YMQPNSTHFFDTD) the chain is on the extracellular side. Residue Asn263 is glycosylated (N-linked (GlcNAc...) asparagine). Residues 272–292 (KMASVFYTLVIPMLNPLIYSL) form a helical membrane-spanning segment. Residues 293 to 307 (RNEEVKNAFYKLFEN) are Cytoplasmic-facing.

It belongs to the G-protein coupled receptor 1 family.

The protein localises to the cell membrane. In terms of biological role, odorant receptor. The polypeptide is Olfactory receptor 8K5 (OR8K5) (Homo sapiens (Human)).